We begin with the raw amino-acid sequence, 826 residues long: U4/U6 snRNA-associated-splicing factor PRP24 (826 aa).

RRM domains lie at 310–385 (TSVF…EAAG), 386–463 (ITLY…YSDP), 477–554 (REVH…LSVS), and 598–670 (RSFA…AVPQ).

The protein resides in the nucleus. In terms of biological role, functions as a recycling factor of the spliceosome, a machinery that forms on each precursor-messenger RNA (pre-mRNA) and catalyzes the removal of introns. Chaperones the re-annealing of U4 and U6 snRNAs (small nuclear RNAs) released from previous rounds of splicing, an initial step in reforming the U4/U6-U5 tri-snRNP (small nuclear ribonucleoprotein) that can reassemble into another spliceosome complex; this step involves binding U6 and facilitating the unwinding of the U6 internal stem loop, followed by base-pairing of U6 to U4. This chain is U4/U6 snRNA-associated-splicing factor PRP24, found in Ophiostoma ulmi (Dutch elm disease fungus).